Consider the following 186-residue polypeptide: Probable nicotinate-nucleotide adenylyltransferase (186 aa).

The protein belongs to the NadD family.

It catalyses the reaction nicotinate beta-D-ribonucleotide + ATP + H(+) = deamido-NAD(+) + diphosphate. The protein operates within cofactor biosynthesis; NAD(+) biosynthesis; deamido-NAD(+) from nicotinate D-ribonucleotide: step 1/1. Functionally, catalyzes the reversible adenylation of nicotinate mononucleotide (NaMN) to nicotinic acid adenine dinucleotide (NaAD). This chain is Probable nicotinate-nucleotide adenylyltransferase, found in Thermus thermophilus (strain ATCC BAA-163 / DSM 7039 / HB27).